A 784-amino-acid chain; its full sequence is Toll-like receptor 2 (784 aa).

Residues 1–20 (MPRALWTAWVWAXIILSTEG) form the signal peptide. Residues 21–587 (ASDQASSLSC…ARLSLSECHR (567 aa)) lie on the Extracellular side of the membrane. The cysteines at positions 30 and 36 are disulfide-linked. LRR repeat units lie at residues 54–77 (VKSLDLSNNEITYVGNRDLQRCVN), 78–101 (LKTLRLGANEIHTVEEDSFFHLRN), 102–125 (LEYLDLSYNRLSNLSSSWFRSLYV), 126–150 (LKFLNLLGNLYKTLGETSLFSHLPN), 151–175 (LXTLKVGNSNSFTEIHEKDFTGLTF), 176–199 (LEELEISAQNLQIYVPKSLKSIQN), 200–223 (ISHLILHLKQPVLLVDILVDIVSS), 224–250 (LDCLELRDTNLHTFHFSEASISEMSTS), 251–278 (VKKLIFRNVQFTDESFVEVVKLFNYVSG), 279–308 (ILEVEFDDCTHDGIGDFRALSLDRIRHLGN), 309–337 (VETLTIRKLHIPQFFLFHDLSSIYPLTGK), 338–361 (VKRVTIENSKVFLVPCLLSQHLKS), 362–388 (LEYLDLSENLMSEETLKNSACKDAWPF), 389–414 (LQTLVLRQNRLKSLEKTGELLLTLEN), 415–437 (LNSLDISKNNFLSMPETCQWPGK), 438–457 (MKQLNLSSTRIHSLTQCLPQ), 458–478 (TLEILDVSNNNLDSFSLILPQ), 479–500 (LKELYISRNKLKTLPDASFLPV), and 501–524 (LSVMRISRNIINTFSKEQLDSFQQ). N-linked (GlcNAc...) asparagine glycosylation is present at N114. N199 is a glycosylation site (N-linked (GlcNAc...) asparagine). C353 and C382 are joined by a disulfide. C432 and C454 are disulfide-bonded. The N-linked (GlcNAc...) asparagine glycan is linked to N442. The 55-residue stretch at 525-579 (LKTLEAGGNNFICSCDFLSFTQGQQALGRVLVDWPDDYRCDSPSHVRGQRVQDAR) folds into the LRRCT domain. A helical membrane pass occupies residues 588–608 (AAVVSAACCALFLVLLLTGVL). The Cytoplasmic segment spans residues 609-784 (CHRFHGLWYM…WLNLRAAIRS (176 aa)). The 144-residue stretch at 639-782 (ICYDAFVSYS…GFWLNLRAAI (144 aa)) folds into the TIR domain. A Glycyl lysine isopeptide (Lys-Gly) (interchain with G-Cter in ubiquitin) cross-link involves residue K754. The short motif at 761–778 (YLEWPVDETQQEGFWLNL) is the ATG16L1-binding motif element.

This sequence belongs to the Toll-like receptor family. In terms of assembly, interacts with LY96, TLR1 and TLR6 (via extracellular domain). TLR2 seems to exist in heterodimers with either TLR1 or TLR6 before stimulation by the ligand. The heterodimers form bigger oligomers in response to their corresponding ligands as well as further heterotypic associations with other receptors such as CD14 and/or CD36. Binds MYD88 (via TIR domain). Interacts with TICAM1. Interacts with CNPY3. Interacts with ATG16L1. Interacts with PPP1R11. Interacts with TICAM2. Interacts with TIRAP. Ubiquitinated at Lys-754 by PPP1R11, leading to its degradation. Deubiquitinated by USP2. In terms of processing, glycosylation of Asn-442 is critical for secretion of the N-terminal ectodomain of TLR2.

Its subcellular location is the membrane. The protein localises to the cytoplasmic vesicle. The protein resides in the phagosome membrane. It localises to the membrane raft. Its function is as follows. Cooperates with LY96 to mediate the innate immune response to bacterial lipoproteins and other microbial cell wall components. Cooperates with TLR1 or TLR6 to mediate the innate immune response to bacterial lipoproteins or lipopeptides. Acts via MYD88 and TRAF6, leading to NF-kappa-B activation, cytokine secretion and the inflammatory response. May also promote apoptosis in response to lipoproteins. Forms activation clusters composed of several receptors depending on the ligand, these clusters trigger signaling from the cell surface and subsequently are targeted to the Golgi in a lipid-raft dependent pathway. Forms the cluster TLR2:TLR6:CD14:CD36 in response to diacylated lipopeptides and TLR2:TLR1:CD14 in response to triacylated lipopeptides. This chain is Toll-like receptor 2 (TLR2), found in Bison bison (American bison).